Here is a 305-residue protein sequence, read N- to C-terminus: Ribonuclease BN (305 aa).

7 residues coordinate Zn(2+): His-64, His-66, Asp-68, His-69, His-141, Asp-212, and His-270. Catalysis depends on Asp-68, which acts as the Proton acceptor.

Belongs to the RNase Z family. RNase BN subfamily. In terms of assembly, homodimer. Requires Zn(2+) as cofactor.

Functionally, zinc phosphodiesterase, which has both exoribonuclease and endoribonuclease activities. In Escherichia coli O45:K1 (strain S88 / ExPEC), this protein is Ribonuclease BN.